Reading from the N-terminus, the 87-residue chain is UPF0250 protein YE3006 (87 aa).

The protein belongs to the UPF0250 family.

In Yersinia enterocolitica serotype O:8 / biotype 1B (strain NCTC 13174 / 8081), this protein is UPF0250 protein YE3006.